We begin with the raw amino-acid sequence, 491 residues long: Cytochrome P450 2F2 (491 aa).

Position 436 (Cys-436) interacts with heme.

The protein belongs to the cytochrome P450 family. The cofactor is heme. Club cells in lung and liver.

It is found in the endoplasmic reticulum membrane. The protein localises to the microsome membrane. In terms of biological role, involved in the regio- and stereoselective transformation of naphthalene to trans-1R-hydroxy-2R-glutathionyl-1,2-dihydronaphthalene in the presence of glutathione and glutathione S-transferases. It specifically catalyzes the production of a very reactive and potentially toxic intermediate, the 2R,2S arene oxide, that is associated with necrosis of the unciliated bronchiolar epithelial cells or club cells in lung. The chain is Cytochrome P450 2F2 (Cyp2f2) from Mus musculus (Mouse).